Here is a 192-residue protein sequence, read N- to C-terminus: Probable apo-citrate lyase phosphoribosyl-dephospho-CoA transferase (192 aa).

The protein belongs to the CitX family.

The enzyme catalyses apo-[citrate lyase ACP] + 2'-(5''-triphospho-alpha-D-ribosyl)-3'-dephospho-CoA = holo-[citrate lyase ACP] + diphosphate. In terms of biological role, transfers 2-(5''-triphosphoribosyl)-3'-dephosphocoenzyme-A on a serine residue to the apo-acyl carrier protein (gamma chain) of the citrate lyase to yield holo-acyl carrier protein. In Streptococcus pyogenes serotype M6 (strain ATCC BAA-946 / MGAS10394), this protein is Probable apo-citrate lyase phosphoribosyl-dephospho-CoA transferase.